Consider the following 210-residue polypeptide: Orotate phosphoribosyltransferase (210 aa).

5-phospho-alpha-D-ribose 1-diphosphate-binding positions include Arg94, Lys98, His100, and 120-128 (EDLISTGGS). Orotate is bound at residue Ser124.

It belongs to the purine/pyrimidine phosphoribosyltransferase family. PyrE subfamily. Homodimer. Mg(2+) is required as a cofactor.

It carries out the reaction orotidine 5'-phosphate + diphosphate = orotate + 5-phospho-alpha-D-ribose 1-diphosphate. It participates in pyrimidine metabolism; UMP biosynthesis via de novo pathway; UMP from orotate: step 1/2. Its function is as follows. Catalyzes the transfer of a ribosyl phosphate group from 5-phosphoribose 1-diphosphate to orotate, leading to the formation of orotidine monophosphate (OMP). The polypeptide is Orotate phosphoribosyltransferase (Bacillus cereus (strain ATCC 10987 / NRS 248)).